A 372-amino-acid chain; its full sequence is Putative aminopeptidase SgcX (372 aa).

Positions 67 and 180 each coordinate a divalent metal cation. Glutamate 212 functions as the Proton acceptor in the catalytic mechanism. A divalent metal cation is bound by residues glutamate 213, aspartate 235, and histidine 329.

It belongs to the peptidase M42 family. It depends on a divalent metal cation as a cofactor.

In Salmonella typhi, this protein is Putative aminopeptidase SgcX (sgcX).